The chain runs to 603 residues: Elongation factor 4 (603 aa).

Positions 7-189 constitute a tr-type G domain; sequence SRIRNFCIIA…SIVHLVPPPS (183 aa). Residues 19–24 and 136–139 contribute to the GTP site; these read DHGKST and NKID.

It belongs to the TRAFAC class translation factor GTPase superfamily. Classic translation factor GTPase family. LepA subfamily.

The protein resides in the cell inner membrane. The enzyme catalyses GTP + H2O = GDP + phosphate + H(+). Its function is as follows. Required for accurate and efficient protein synthesis under certain stress conditions. May act as a fidelity factor of the translation reaction, by catalyzing a one-codon backward translocation of tRNAs on improperly translocated ribosomes. Back-translocation proceeds from a post-translocation (POST) complex to a pre-translocation (PRE) complex, thus giving elongation factor G a second chance to translocate the tRNAs correctly. Binds to ribosomes in a GTP-dependent manner. This is Elongation factor 4 from Crocosphaera subtropica (strain ATCC 51142 / BH68) (Cyanothece sp. (strain ATCC 51142)).